Here is a 192-residue protein sequence, read N- to C-terminus: Adenylate kinase (192 aa).

12 to 17 (GSGKTT) serves as a coordination point for ATP. The NMP stretch occupies residues 34–63 (STGDLLRAQVASGSELGKTIDSFISKGNLV). AMP is bound by residues threonine 35, arginine 40, 61–63 (NLV), 88–91 (GYPR), and glutamine 95. An LID region spans residues 130 to 136 (GRNRGAD). ATP is bound at residue arginine 131. AMP contacts are provided by arginine 133 and arginine 145. Arginine 173 contacts ATP.

It belongs to the adenylate kinase family. In terms of assembly, monomer.

Its subcellular location is the cytoplasm. It carries out the reaction AMP + ATP = 2 ADP. Its pathway is purine metabolism; AMP biosynthesis via salvage pathway; AMP from ADP: step 1/1. Its function is as follows. Catalyzes the reversible transfer of the terminal phosphate group between ATP and AMP. Plays an important role in cellular energy homeostasis and in adenine nucleotide metabolism. The protein is Adenylate kinase of Campylobacter jejuni subsp. doylei (strain ATCC BAA-1458 / RM4099 / 269.97).